The following is a 248-amino-acid chain: MASHLGGLRDAPVVRVESLVRSFGPRTILDGLSLDIEKGEFVALLGRSGSGKSTLLRALADLDDKVSGSGRLETPDKKSVVFQDARLLPWKRVLENVVLGLDLPDAAERGRAALEEVGLNGRETAWPVELSGGEQQRVALARSLVRDPDLLLADEPFGALDALTRLRMHDLLRQLCARHQPAVLLVTHDVDEAVTLADRVLVLDKGAIAADIAIDIPKPRDHGHRRFGEIRSELLRHLGVETRPVLPV.

Residues 14–230 (VRVESLVRSF…DHGHRRFGEI (217 aa)) form the ABC transporter domain. Position 46–53 (46–53 (GRSGSGKS)) interacts with ATP.

It belongs to the ABC transporter superfamily. Aliphatic sulfonates importer (TC 3.A.1.17.2) family. As to quaternary structure, the complex is composed of two ATP-binding proteins (SsuB), two transmembrane proteins (SsuC) and a solute-binding protein (SsuA).

It is found in the cell inner membrane. The catalysed reaction is ATP + H2O + aliphatic sulfonate-[sulfonate-binding protein]Side 1 = ADP + phosphate + aliphatic sulfonateSide 2 + [sulfonate-binding protein]Side 1.. Its function is as follows. Part of the ABC transporter complex SsuABC involved in aliphatic sulfonates import. Responsible for energy coupling to the transport system. The chain is Aliphatic sulfonates import ATP-binding protein SsuB 2 from Mesorhizobium japonicum (strain LMG 29417 / CECT 9101 / MAFF 303099) (Mesorhizobium loti (strain MAFF 303099)).